Reading from the N-terminus, the 181-residue chain is Peptide deformylase (181 aa).

Fe cation-binding residues include Cys-104 and His-146. Glu-147 is a catalytic residue. His-150 is a Fe cation binding site.

It belongs to the polypeptide deformylase family. The cofactor is Fe(2+).

It catalyses the reaction N-terminal N-formyl-L-methionyl-[peptide] + H2O = N-terminal L-methionyl-[peptide] + formate. In terms of biological role, removes the formyl group from the N-terminal Met of newly synthesized proteins. Requires at least a dipeptide for an efficient rate of reaction. N-terminal L-methionine is a prerequisite for activity but the enzyme has broad specificity at other positions. This chain is Peptide deformylase, found in Helicobacter hepaticus (strain ATCC 51449 / 3B1).